We begin with the raw amino-acid sequence, 489 residues long: Glutamate--tRNA ligase (489 aa).

Positions 11-21 (PSPTGHLHIGN) match the 'HIGH' region motif. The 'KMSKS' region signature appears at 252 to 256 (KLSKR). K255 serves as a coordination point for ATP.

It belongs to the class-I aminoacyl-tRNA synthetase family. Glutamate--tRNA ligase type 1 subfamily. As to quaternary structure, monomer.

It is found in the cytoplasm. It carries out the reaction tRNA(Glu) + L-glutamate + ATP = L-glutamyl-tRNA(Glu) + AMP + diphosphate. Its function is as follows. Catalyzes the attachment of glutamate to tRNA(Glu) in a two-step reaction: glutamate is first activated by ATP to form Glu-AMP and then transferred to the acceptor end of tRNA(Glu). This Oceanobacillus iheyensis (strain DSM 14371 / CIP 107618 / JCM 11309 / KCTC 3954 / HTE831) protein is Glutamate--tRNA ligase.